The chain runs to 598 residues: Elongation factor 4 (598 aa).

The tr-type G domain occupies K2 to E184. GTP-binding positions include D14–T19 and N131–D134.

It belongs to the TRAFAC class translation factor GTPase superfamily. Classic translation factor GTPase family. LepA subfamily.

Its subcellular location is the cell inner membrane. It catalyses the reaction GTP + H2O = GDP + phosphate + H(+). In terms of biological role, required for accurate and efficient protein synthesis under certain stress conditions. May act as a fidelity factor of the translation reaction, by catalyzing a one-codon backward translocation of tRNAs on improperly translocated ribosomes. Back-translocation proceeds from a post-translocation (POST) complex to a pre-translocation (PRE) complex, thus giving elongation factor G a second chance to translocate the tRNAs correctly. Binds to ribosomes in a GTP-dependent manner. In Pasteurella multocida (strain Pm70), this protein is Elongation factor 4.